Here is a 287-residue protein sequence, read N- to C-terminus: Nucleotide-binding protein VIBHAR_03667 (287 aa).

An ATP-binding site is contributed by 8-15 (GHSGAGKS). 56–59 (DIRN) serves as a coordination point for GTP.

Belongs to the RapZ-like family.

Displays ATPase and GTPase activities. The chain is Nucleotide-binding protein VIBHAR_03667 from Vibrio campbellii (strain ATCC BAA-1116).